Consider the following 393-residue polypeptide: Pyridoxamine--pyruvate transaminase (393 aa).

Positions 68, 95, and 146 each coordinate pyridoxal 5'-phosphate. Lys-197 carries the post-translational modification N6-(pyridoxal phosphate)lysine. Arg-345 serves as a coordination point for pyridoxal 5'-phosphate.

The protein belongs to the class-V pyridoxal-phosphate-dependent aminotransferase family. In terms of assembly, homotetramer. Pyridoxal 5'-phosphate is required as a cofactor.

The enzyme catalyses pyridoxamine + pyruvate = pyridoxal + L-alanine. Its function is as follows. Catalyzes a reversible transamination reaction between pyridoxamine and pyruvate to form pyridoxal and L-alanine. This is Pyridoxamine--pyruvate transaminase (ppaT) from Mesorhizobium japonicum (strain LMG 29417 / CECT 9101 / MAFF 303099) (Mesorhizobium loti (strain MAFF 303099)).